The following is a 199-amino-acid chain: Recombination protein RecR (199 aa).

The C4-type zinc finger occupies 58–73 (CVRCGNITNADLCGIC). The region spanning 81–176 (GELCVVEDVA…QVTSLAQGVP (96 aa)) is the Toprim domain.

This sequence belongs to the RecR family.

In terms of biological role, may play a role in DNA repair. It seems to be involved in an RecBC-independent recombinational process of DNA repair. It may act with RecF and RecO. The polypeptide is Recombination protein RecR (Cereibacter sphaeroides (strain ATCC 17029 / ATH 2.4.9) (Rhodobacter sphaeroides)).